Consider the following 500-residue polypeptide: Cytochrome P450 71B38 (500 aa).

A helical membrane pass occupies residues 3–23; it reads IFLCFLLLLPLSLILFKKLLP. C441 is a heme binding site.

The protein belongs to the cytochrome P450 family. Heme is required as a cofactor.

The protein localises to the membrane. This Arabidopsis thaliana (Mouse-ear cress) protein is Cytochrome P450 71B38 (CYP71B38).